The following is an 85-amino-acid chain: Large ribosomal subunit protein bL27 (85 aa).

The interval 1–20 (MAHKKAGGSTRNGRDSEAKR) is disordered.

Belongs to the bacterial ribosomal protein bL27 family.

The chain is Large ribosomal subunit protein bL27 from Enterobacter sp. (strain 638).